The chain runs to 433 residues: Arrestin domain-containing protein 1 (433 aa).

Disordered stretches follow at residues 296–322 (GLGL…AEAA) and 349–372 (LSSV…PLHP). Over residues 301-312 (PGAPPLVVPSAP) the composition is skewed to pro residues. 2 short sequence motifs (PPxY motif) span residues 402 to 405 (PPEY) and 415 to 418 (PPSY).

The protein belongs to the arrestin family. As to quaternary structure, interacts (via PPxY motifs) with ITCH (via WW domains); the interaction is direct and participates in the recruitment of the ubiquitin-protein ligase ITCH to the NOTCH1 receptor. Interacts with ARRB1 and ARRB2; the interaction is direct. Interacts with TSG101; may recruit TSG101 to the plasma membrane. Interacts (via PPxY motifs) with WWP2 (via WW domains); ubiquitinates ARRDC1. Interacts with SLC11A2; controls the incorporation of SLC11A2 into extracellular vesicles through an ubiquitination-dependent mechanism. Interacts with WWP1 (via WW domains). Interacts with NEDD4 (via WW domains). Interacts with PDCD6IP. Ubiquitinated. Ubiquitination by WWP2; promotes localization to extracellular microvesicles. Ubiquitinated by WWP1.

It is found in the cell membrane. Functions as an adapter recruiting ubiquitin-protein ligases to their specific substrates. Through an ubiquitination-dependent mechanism plays for instance a role in the incorporation of SLC11A2 into extracellular vesicles. More generally, plays a role in the extracellular transport of proteins between cells through the release in the extracellular space of microvesicles. By participating in the ITCH-mediated ubiquitination and subsequent degradation of NOTCH1, negatively regulates the NOTCH signaling pathway. The protein is Arrestin domain-containing protein 1 of Homo sapiens (Human).